Here is a 225-residue protein sequence, read N- to C-terminus: Phosphoglycolate phosphatase (225 aa).

The Nucleophile role is filled by Asp11. Mg(2+) contacts are provided by Asp11 and Asp13. Position 153 (Lys153) interacts with substrate. The Mg(2+) site is built by Asp176 and Asp180.

This sequence belongs to the archaeal SPP-like hydrolase family. The cofactor is Mg(2+).

It catalyses the reaction 2-phosphoglycolate + H2O = glycolate + phosphate. Catalyzes the dephosphorylation of 2-phosphoglycolate. The protein is Phosphoglycolate phosphatase of Halobacterium salinarum (strain ATCC 29341 / DSM 671 / R1).